Here is a 420-residue protein sequence, read N- to C-terminus: Serine hydroxymethyltransferase (420 aa).

Residues Leu123 and 127–129 (GHL) contribute to the (6S)-5,6,7,8-tetrahydrofolate site. N6-(pyridoxal phosphate)lysine is present on Lys232. 357–359 (SPF) provides a ligand contact to (6S)-5,6,7,8-tetrahydrofolate.

The protein belongs to the SHMT family. Homodimer. It depends on pyridoxal 5'-phosphate as a cofactor.

The protein resides in the cytoplasm. The enzyme catalyses (6R)-5,10-methylene-5,6,7,8-tetrahydrofolate + glycine + H2O = (6S)-5,6,7,8-tetrahydrofolate + L-serine. It participates in one-carbon metabolism; tetrahydrofolate interconversion. Its pathway is amino-acid biosynthesis; glycine biosynthesis; glycine from L-serine: step 1/1. Its function is as follows. Catalyzes the reversible interconversion of serine and glycine with tetrahydrofolate (THF) serving as the one-carbon carrier. This reaction serves as the major source of one-carbon groups required for the biosynthesis of purines, thymidylate, methionine, and other important biomolecules. Also exhibits THF-independent aldolase activity toward beta-hydroxyamino acids, producing glycine and aldehydes, via a retro-aldol mechanism. This Streptococcus pyogenes serotype M12 (strain MGAS2096) protein is Serine hydroxymethyltransferase.